Here is a 158-residue protein sequence, read N- to C-terminus: MTELKLIHIFTDGSCLGNPGPGGYGIVMNYKGHTKEMSDGFALTTNNRMELLAPIVALEALKEPCKVILTSDSQYMRQGITTWIHGWKKKGWMTSNRTPVKNVDLWKRLDKAAQLHQIDWRWVKGHAGHPENERCDQLARAAAEASPTQVDEGYQPES.

In terms of domain architecture, RNase H type-1 spans 3–144 (ELKLIHIFTD…CDQLARAAAE (142 aa)). 4 residues coordinate Mg(2+): Asp-12, Glu-50, Asp-72, and Asp-136. Residues 137–158 (QLARAAAEASPTQVDEGYQPES) are disordered.

This sequence belongs to the RNase H family. Monomer. The cofactor is Mg(2+).

It is found in the cytoplasm. It carries out the reaction Endonucleolytic cleavage to 5'-phosphomonoester.. Endonuclease that specifically degrades the RNA of RNA-DNA hybrids. The polypeptide is Ribonuclease H (Shewanella sp. (strain ANA-3)).